The chain runs to 303 residues: MTWQFPDRLSTNSALPGPAFSGQPAVDLSSFADFLRRQAPELLPAALGGAQSGPASSSGGTGQLPHGTTIVALKYPGGVVLAGDRRSTQGNMIAGRDVKKVYITDDYTATGIAGTAAIAVEFARLYAVELEHYEKLEGVPLTFAGKVNRLAIMVRGNLAAAMQGLVALPLLAGYDIDARDPEGAGRIVSFDAAGGWNLEEEGYQSVGSGSIFAKSSMKKLYSQVVDADSAVRVAIEALYDAADDDSATGGPDLVRGIYPTAVTIGAEGALEVPESRIAELAREVIQSRSRADTFGPDAAGGDK.

The propeptide at 1-67 (MTWQFPDRLS…SGGTGQLPHG (67 aa)) is removed in mature form; by autocatalysis. The active-site Nucleophile is the Thr68.

Belongs to the peptidase T1B family. As to quaternary structure, the 20S proteasome core is composed of 14 alpha and 14 beta subunits that assemble into four stacked heptameric rings, resulting in a barrel-shaped structure. The two inner rings, each composed of seven catalytic beta subunits, are sandwiched by two outer rings, each composed of seven alpha subunits. The catalytic chamber with the active sites is on the inside of the barrel. Has a gated structure, the ends of the cylinder being occluded by the N-termini of the alpha-subunits. Is capped by the proteasome-associated ATPase, ARC.

The protein localises to the cytoplasm. It catalyses the reaction Cleavage of peptide bonds with very broad specificity.. The protein operates within protein degradation; proteasomal Pup-dependent pathway. With respect to regulation, the formation of the proteasomal ATPase ARC-20S proteasome complex, likely via the docking of the C-termini of ARC into the intersubunit pockets in the alpha-rings, may trigger opening of the gate for substrate entry. Interconversion between the open-gate and close-gate conformations leads to a dynamic regulation of the 20S proteasome proteolysis activity. Functionally, component of the proteasome core, a large protease complex with broad specificity involved in protein degradation. The protein is Proteasome subunit beta of Mycobacterium avium (strain 104).